We begin with the raw amino-acid sequence, 208 residues long: ATP phosphoribosyltransferase (208 aa).

It belongs to the ATP phosphoribosyltransferase family. Short subfamily. As to quaternary structure, heteromultimer composed of HisG and HisZ subunits.

It is found in the cytoplasm. The enzyme catalyses 1-(5-phospho-beta-D-ribosyl)-ATP + diphosphate = 5-phospho-alpha-D-ribose 1-diphosphate + ATP. It participates in amino-acid biosynthesis; L-histidine biosynthesis; L-histidine from 5-phospho-alpha-D-ribose 1-diphosphate: step 1/9. Catalyzes the condensation of ATP and 5-phosphoribose 1-diphosphate to form N'-(5'-phosphoribosyl)-ATP (PR-ATP). Has a crucial role in the pathway because the rate of histidine biosynthesis seems to be controlled primarily by regulation of HisG enzymatic activity. In Thermotoga maritima (strain ATCC 43589 / DSM 3109 / JCM 10099 / NBRC 100826 / MSB8), this protein is ATP phosphoribosyltransferase (hisG).